Reading from the N-terminus, the 547-residue chain is Intercellular adhesion molecule 3 (547 aa).

The signal sequence occupies residues 1-29 (MATMVPSVLWPRACWTLLVCCLLTPGVQG). The Extracellular portion of the chain corresponds to 30 to 485 (QEFLLRVEPQ…VMDIEAGSSH (456 aa)). Residues 46–103 (GGSLFVNCSTDCPSSEKIALETSLSKELVASGMGWAAFNLSNVTGNSRILCSVYCNGS) form the Ig-like C2-type 1 domain. N-linked (GlcNAc...) asparagine glycosylation is found at N52, N84, N87, N101, N110, and N134. Intrachain disulfides connect C53–C96 and C57–C100. The Ig-like C2-type 2 domain maps to 132-197 (GQNFTLRCQV…FSCRTELDMQ (66 aa)). Cysteines 139 and 190 form a disulfide. N-linked (GlcNAc...) asparagine glycans are attached at residues N206, N264, N295, N308, N320, N363, N389, N453, and N457. Residues 234–301 (ETSWPVDCTL…IVCNVTLGGE (68 aa)) enclose the Ig-like C2-type 3 domain. Residues C241 and C294 are joined by a disulfide bond. The 54-residue stretch at 329-382 (GSTVTVSCMAGARVQVTLDGVPAAAPGQPAQLQLNATESDDRRSFFCSATLEVD) folds into the Ig-like C2-type 4 domain. A disulfide bond links C336 and C375. The Ig-like C2-type 5 domain occupies 416-469 (KTTHVLQCQARGNPYPELRCLKEGSSREVPVGIPFFVNVTHNGTYQCQASSSRG). C423 and C462 form a disulfide bridge. A helical transmembrane segment spans residues 486–510 (FVPVFVAVLLTLGVVTIVLALMYVF). Topologically, residues 511-547 (REHKRSGSYHVREESTYLPLTSMQPTQAMGEEPSRAE) are cytoplasmic.

The protein belongs to the immunoglobulin superfamily. ICAM family. Interacts with moesin/MSN. Post-translationally, upon stimulation by a physiologic stimuli becomes rapidly and transiently phosphorylated on serine residues. As to expression, leukocytes.

The protein localises to the membrane. Its function is as follows. ICAM proteins are ligands for the leukocyte adhesion protein LFA-1 (integrin alpha-L/beta-2). ICAM3 is also a ligand for integrin alpha-D/beta-2. In association with integrin alpha-L/beta-2, contributes to apoptotic neutrophil phagocytosis by macrophages. This chain is Intercellular adhesion molecule 3 (ICAM3), found in Pan troglodytes (Chimpanzee).